Reading from the N-terminus, the 264-residue chain is 3-methyl-2-oxobutanoate hydroxymethyltransferase (264 aa).

Asp-45 and Asp-84 together coordinate Mg(2+). 3-methyl-2-oxobutanoate contacts are provided by residues 45-46 (DS), Asp-84, and Lys-112. Glu-114 provides a ligand contact to Mg(2+). Glu-181 (proton acceptor) is an active-site residue.

The protein belongs to the PanB family. In terms of assembly, homodecamer; pentamer of dimers. Mg(2+) serves as cofactor.

It is found in the cytoplasm. The catalysed reaction is 3-methyl-2-oxobutanoate + (6R)-5,10-methylene-5,6,7,8-tetrahydrofolate + H2O = 2-dehydropantoate + (6S)-5,6,7,8-tetrahydrofolate. It functions in the pathway cofactor biosynthesis; (R)-pantothenate biosynthesis; (R)-pantoate from 3-methyl-2-oxobutanoate: step 1/2. Functionally, catalyzes the reversible reaction in which hydroxymethyl group from 5,10-methylenetetrahydrofolate is transferred onto alpha-ketoisovalerate to form ketopantoate. In Pectobacterium atrosepticum (strain SCRI 1043 / ATCC BAA-672) (Erwinia carotovora subsp. atroseptica), this protein is 3-methyl-2-oxobutanoate hydroxymethyltransferase.